Reading from the N-terminus, the 347-residue chain is CCN family member 2 (347 aa).

The N-terminal stretch at 1 to 24 is a signal peptide; the sequence is MLASVAGPVSLALVLLLCTRPATG. Residues 25 to 96 enclose the IGFBP N-terminal domain; it reads QDCSAQCQCA…NRKIGVCTAK (72 aa). 6 cysteine pairs are disulfide-bonded: C27/C52, C31/C54, C33/C55, C41/C58, C66/C80, and C72/C93. In terms of domain architecture, VWFC spans 99-165; that stretch reads APCVFGGSVY…GKCCEEWVCD (67 aa). The TSP type-1 domain maps to 196-241; that stretch reads NCLVQTTEWSACSKTCGMGISTRVTNDNTFCRLEKQSRLCMVRPCE. A heparin-binding region spans residues 245 to 347; sequence EENIKKGKKC…YYRKMYGDMA (103 aa). Cystine bridges form between C254-C291, C271-C305, C282-C321, C285-C323, and C290-C327. The region spanning 254 to 328 is the CTCK domain; sequence CIRTPKIAKP…KTCACHYNCP (75 aa).

Belongs to the CCN family. As to quaternary structure, monomer. Interacts with TSKU.

It is found in the secreted. Its subcellular location is the extracellular space. The protein resides in the extracellular matrix. Functionally, major connective tissue mitoattractant secreted by vascular endothelial cells. Promotes proliferation and differentiation of chondrocytes. Is involved in the stimulation of osteoblast differentiation and has a critical role in osteogenesis. Mediates heparin- and divalent cation-dependent cell adhesion in many cell types including fibroblasts, myofibroblasts, endothelial and epithelial cells. Enhances fibroblast growth factor-induced DNA synthesis. The sequence is that of CCN family member 2 from Rattus norvegicus (Rat).